We begin with the raw amino-acid sequence, 1356 residues long: Partitioning defective 3 homolog (1356 aa).

Ser25 is modified (phosphoserine). Disordered regions lie at residues 81 to 100 (EQDPHHGGDGTSASSTGTQS) and 154 to 262 (SVSD…GLEH). A Phosphothreonine modification is found at Thr91. Positions 91-100 (TSASSTGTQS) are enriched in low complexity. Composition is skewed to polar residues over residues 154-163 (SVSDSNFSSE) and 171-187 (TRWSTTAGFLKQNTAGS). Phosphoserine is present on residues Ser156 and Ser174. Over residues 190 to 203 (TCDRKKDENYRSLP) the composition is skewed to basic and acidic residues. The span at 204–224 (RDTSNWSNQFQRDNARSSLSA) shows a compositional bias: polar residues. The segment covering 246–260 (DNSRVEPVGHADTGL) has biased composition (basic and acidic residues). The region spanning 271 to 359 (MVKLVEVPND…TPIIWFHVVP (89 aa)) is the PDZ 1 domain. Phosphoserine is present on Ser383. The interval 408–448 (LNHPPEQIDSHSRLPHSAHPSGKPPSAPASAPQNVFSTTVS) is disordered. 2 PDZ domains span residues 461–546 (NIQL…LVFR) and 590–677 (EVPL…GMIQ). Position 489 is a phosphotyrosine (Tyr489). Phosphoserine is present on residues Ser692, Ser695, Ser715, Ser728, Ala792, Ser809, and Ser827. Residues 712-936 (RRISHSLYSG…AAIDKSYDKP (225 aa)) are interaction with PRKCI and PRKCZ. Position 834 is an N6-acetyllysine (Lys834). A Phosphoserine modification is found at Ser837. Lys851 bears the N6-acetyllysine mark. A phosphoserine mark is found at Ser852 and Ser873. Disordered stretches follow at residues 865 to 886 (TVDDQKAGSPSRDVGPSLGLKK) and 932 to 1025 (SYDK…DMFR). Position 885 is an N6-acetyllysine (Lys885). The interval 935–1356 (KPAVDDDDEG…TPEKGRPFYS (422 aa)) is interaction with FRMD4A. Residues 939–953 (DDDDEGMETLEEDTE) are compositionally biased toward acidic residues. Ser962 is subject to Phosphoserine; by AURKA. Polar residues predominate over residues 968-982 (DQPSHSLERQMNGNQ). Residues Ser971 and Ser973 each carry the phosphoserine modification. Positions 983–1009 (EKGDKTDRKKDKTGKEKKKDRDKEKDK) are enriched in basic and acidic residues. A Phosphoserine modification is found at Ser1046. The stretch at 1049 to 1077 (SEEERIRMKQEQERIQAKTREFRERQARE) forms a coiled coil. Residues 1129–1356 (QVKKPRNSKP…TPEKGRPFYS (228 aa)) are disordered. Residues 1136–1149 (SKPSPVDSNRSTPS) are compositionally biased toward polar residues. Residues 1150-1177 (NHDRIQRLRQEFQQAKQDEDVEDRRRTY) show a composition bias toward basic and acidic residues. Coiled-coil stretches lie at residues 1151 to 1174 (HDRIQRLRQEFQQAKQDEDVEDRR), 1201 to 1224 (VQMQRQRQEERESSQQAQRQYSSL), and 1280 to 1301 (MLETQELLRQEQRRKEQQMKKQ). Residues 1196 to 1205 (SVSVEVQMQR) are compositionally biased toward low complexity. The span at 1221-1245 (YSSLPRQSRKNASSVSQDSWEQNYS) shows a compositional bias: polar residues. Positions 1285–1298 (ELLRQEQRRKEQQM) are enriched in basic and acidic residues. The span at 1337-1346 (SQVARLNRLQ) shows a compositional bias: polar residues. Over residues 1347–1356 (TPEKGRPFYS) the composition is skewed to basic and acidic residues. Position 1350 is an N6-acetyllysine (Lys1350).

Belongs to the PAR3 family. In terms of assembly, interacts (via PDZ 1 domain) with F11R/JAM1, PARD6A and PARD6B. Interacts with PRCKI and CDH5. Interacts (via PDZ 3 domain) with PTEN (via C-terminus). Part of a complex with PARD6A or PARD6B, PRKCI or PRKCZ and CDC42 or RAC1. Component of a complex whose core is composed of ARHGAP17, AMOT, PALS1, PATJ and PARD3/PAR3. Interacts with LIMK2, AURKA and AURKB. Component of the Par polarity complex, composed of at least phosphorylated PRKCZ, PARD3 and TIAM1. Directly interacts with TIAM1 and TIAM2. Interacts with ECT2, FBF1 and SIRT2. Interacts (via coiled-coil domain) with FRMD4A. Found in a complex with PARD3, CYTH1 and FRMD4A. Interacts with SAPCD2. Interacts with PRKCA. As to quaternary structure, interacts with PRKCZ. Post-translationally, acetylated. Deacetylated by SIRT2, thereby inhibiting Schwann cell peripheral myelination. In terms of processing, phosphorylation at Ser-827 by PRKCZ and PRKCI occurs at the most apical tip of epithelial cell-cell contacts during the initial phase of tight junction formation and may promote dissociation of the complex with PARD6. EGF-induced Tyr-1127 phosphorylation mediates dissociation from LIMK2. Phosphorylation by AURKA at Ser-962 is required for the normal establishment of neuronal polarity. As to expression, widely expressed.

Its subcellular location is the cytoplasm. It localises to the endomembrane system. The protein localises to the cell junction. It is found in the tight junction. The protein resides in the adherens junction. Its subcellular location is the cell membrane. It localises to the cell cortex. The protein localises to the cytoskeleton. Its function is as follows. Adapter protein involved in asymmetrical cell division and cell polarization processes. Seems to play a central role in the formation of epithelial tight junctions. Targets the phosphatase PTEN to cell junctions. Involved in Schwann cell peripheral myelination. Association with PARD6B may prevent the interaction of PARD3 with F11R/JAM1, thereby preventing tight junction assembly. The PARD6-PARD3 complex links GTP-bound Rho small GTPases to atypical protein kinase C proteins. Required for establishment of neuronal polarity and normal axon formation in cultured hippocampal neurons. In Homo sapiens (Human), this protein is Partitioning defective 3 homolog.